We begin with the raw amino-acid sequence, 264 residues long: MAAELTTAGYIGHHLAFLKTGDSFWHVHLDTLLFSIISGAIFLFVFSKVAKKATPGVPSKMQCFVEIMVDWIDGIVKENFHGPRHAVGPLALTIFCWVFIMNAIDLIPVDFLPQLAHLFGIEYLRAVPTADISGTLGLSIGVFFLIIFYTIKSKGMSGFVKEYTLHPFNHPLLIPVNLALESVTLLAKPVSLAFRLFGNMYAGELIFILIAVMYMANNFALNSMGIFMHLAWAIFHILVITLQAFIFMMLTVVYLSMGYNKAEH.

The next 6 helical transmembrane spans lie at 27–47 (VHLD…FVFS), 87–107 (VGPL…IDLI), 131–151 (DISG…FYTI), 172–192 (LLIP…PVSL), 196–216 (LFGN…MYMA), and 230–250 (LAWA…FMML).

It belongs to the ATPase A chain family. F-type ATPases have 2 components, CF(1) - the catalytic core - and CF(0) - the membrane proton channel. CF(1) has five subunits: alpha(3), beta(3), gamma(1), delta(1), epsilon(1). CF(0) has three main subunits: a(1), b(2) and c(9-12). The alpha and beta chains form an alternating ring which encloses part of the gamma chain. CF(1) is attached to CF(0) by a central stalk formed by the gamma and epsilon chains, while a peripheral stalk is formed by the delta and b chains.

The protein localises to the cell inner membrane. In terms of biological role, key component of the proton channel; it plays a direct role in the translocation of protons across the membrane. In Pasteurella multocida (strain Pm70), this protein is ATP synthase subunit a.